Consider the following 414-residue polypeptide: Secernin-1 (414 aa).

An N-acetylalanine modification is found at Ala2. Cys9 is a catalytic residue.

This sequence belongs to the peptidase C69 family. Secernin subfamily.

It localises to the cytoplasm. Its function is as follows. Regulates exocytosis in mast cells. Increases both the extent of secretion and the sensitivity of mast cells to stimulation with calcium. This is Secernin-1 (SCRN1) from Bos taurus (Bovine).